The primary structure comprises 153 residues: Interleukin-17A (153 aa).

The N-terminal stretch at 1–23 is a signal peptide; the sequence is MTPVRSSSLSLLLLLSLVALVKA. N-linked (GlcNAc...) asparagine glycosylation occurs at asparagine 53. Disulfide bonds link cysteine 92–cysteine 142 and cysteine 97–cysteine 144.

The protein belongs to the IL-17 family. As to quaternary structure, homodimer. Forms complexes with IL17RA and IL17RC receptors with 2:1 binding stoichiometry: two receptor chains for one interleukin molecule. IL17A homodimer preferentially drives the formation of IL17RA-IL17RC heterodimeric receptor complex. IL17A homodimer adopts an asymmetrical ternary structure with one IL17RA molecule, allowing for high affinity interactions of one IL17A monomer with one IL17RA molecule (via D1 and D2 domains), while disfavoring binding of a second IL17RA molecule on the other IL17A monomer. Heterodimer with IL17F. IL17A-IL17F forms complexes with IL17RA-IL17RC, but with lower affinity when compared to IL17A homodimer. IL17RA and IL17RC chains cannot distinguish between IL17A and IL17F molecules, potentially enabling the formation of topologically distinct complexes. Highly expressed in adult heart, skin, and intestinal tissues, such as jejunum and ileum.

It is found in the secreted. Functionally, effector cytokine of innate and adaptive immune system involved in antimicrobial host defense and maintenance of tissue integrity. Signals via IL17RA-IL17RC heterodimeric receptor complex, triggering homotypic interaction of IL17RA and IL17RC chains with TRAF3IP2 adapter. This leads to downstream TRAF6-mediated activation of NF-kappa-B and MAPkinase pathways ultimately resulting in transcriptional activation of cytokines, chemokines, antimicrobial peptides and matrix metalloproteinases, with potential strong immune inflammation. Plays an important role in connecting T cell-mediated adaptive immunity and acute inflammatory response to destroy extracellular bacteria and fungi. As a signature effector cytokine of T-helper 17 cells (Th17), primarily induces neutrophil activation and recruitment at infection and inflammatory sites. In airway epithelium, mediates neutrophil chemotaxis via induction of CXCL1 and CXCL5 chemokines. In secondary lymphoid organs, contributes to germinal center formation by regulating the chemotactic response of B cells to CXCL12 and CXCL13, enhancing retention of B cells within the germinal centers, B cell somatic hypermutation rate and selection toward plasma cells. Effector cytokine of a subset of gamma-delta T cells that functions as part of an inflammatory circuit downstream IL1B, TLR2 and IL23A-IL12B to promote neutrophil recruitment for efficient bacterial clearance. Effector cytokine of innate immune cells including invariant natural killer cell (iNKT) and group 3 innate lymphoid cells that mediate initial neutrophilic inflammation. Involved in the maintenance of the integrity of epithelial barriers during homeostasis and pathogen infection. Upon acute injury, has a direct role in epithelial barrier formation by regulating OCLN localization and tight junction biogenesis. As part of the mucosal immune response induced by commensal bacteria, enhances host's ability to resist pathogenic bacterial and fungal infections by promoting neutrophil recruitment and antimicrobial peptides release. In synergy with IL17F, mediates the production of antimicrobial beta-defensins DEFB1, DEFB103A, and DEFB104A by mucosal epithelial cells, limiting the entry of microbes through the epithelial barriers. Involved in antiviral host defense through various mechanisms. Enhances immunity against West Nile virus by promoting T cell cytotoxicity. May play a beneficial role in influenza A virus (H5N1) infection by enhancing B cell recruitment and immune response in the lung. Contributes to influenza A virus (H1N1) clearance by driving the differentiation of B-1a B cells, providing for production of virus-specific IgM antibodies at first line of host defense. The sequence is that of Interleukin-17A (IL17A) from Sus scrofa (Pig).